The chain runs to 151 residues: Single-stranded DNA-binding protein, mitochondrial (151 aa).

A mitochondrion-targeting transit peptide spans 1-16 (MFRRPVLQVFRQFVRQ). The SSB domain maps to 30 to 141 (LNRVQLLGRV…IIADNIIFLS (112 aa)). 2 positions are modified to phosphoserine: serine 67 and serine 79. Lysine 113 carries the post-translational modification N6-acetyllysine. N6-succinyllysine is present on lysine 122.

As to quaternary structure, homotetramer. Interacts with MPG/AAG, through inhibition of its glycosylase activity it potentially prevents formation of DNA breaks in ssDNA, ensuring that base removal primarily occurs in dsDNA. Interacts with POLDIP2. Interacts with PRIMPOL.

It is found in the mitochondrion. Its subcellular location is the mitochondrion matrix. It localises to the mitochondrion nucleoid. Its function is as follows. Binds preferentially and cooperatively to pyrimidine rich single-stranded DNA (ss-DNA). In vitro, required to maintain the copy number of mitochondrial DNA (mtDNA) and plays a crucial role during mtDNA replication by stimulating the activity of the replisome components POLG and TWNK at the replication fork. Promotes the activity of the gamma complex polymerase POLG, largely by organizing the template DNA and eliminating secondary structures to favor ss-DNA conformations that facilitate POLG activity. In addition it is able to promote the 5'-3' unwinding activity of the mtDNA helicase TWNK. May also function in mtDNA repair. This Rattus norvegicus (Rat) protein is Single-stranded DNA-binding protein, mitochondrial (Ssbp1).